We begin with the raw amino-acid sequence, 209 residues long: Uracil phosphoribosyltransferase (209 aa).

5-phospho-alpha-D-ribose 1-diphosphate is bound by residues arginine 79, arginine 104, and aspartate 131–serine 139. Residues isoleucine 194 and glycine 199–alanine 201 each bind uracil. Aspartate 200 is a binding site for 5-phospho-alpha-D-ribose 1-diphosphate.

This sequence belongs to the UPRTase family. Requires Mg(2+) as cofactor.

The catalysed reaction is UMP + diphosphate = 5-phospho-alpha-D-ribose 1-diphosphate + uracil. Its pathway is pyrimidine metabolism; UMP biosynthesis via salvage pathway; UMP from uracil: step 1/1. With respect to regulation, allosterically activated by GTP. In terms of biological role, catalyzes the conversion of uracil and 5-phospho-alpha-D-ribose 1-diphosphate (PRPP) to UMP and diphosphate. The chain is Uracil phosphoribosyltransferase from Streptococcus pyogenes serotype M49 (strain NZ131).